The following is a 138-amino-acid chain: Large ribosomal subunit protein eL27 (138 aa).

Belongs to the eukaryotic ribosomal protein eL27 family.

The polypeptide is Large ribosomal subunit protein eL27 (RPL27) (Solanum tuberosum (Potato)).